Here is a 164-residue protein sequence, read N- to C-terminus: MEESKSSVASRLMSVKRTSGKSYGRIAEETGLTNVYVAQLLRRQAQLKADTAPKLQAALPELTDELLQEMMKPPLRSYDPHLIQEPTVYRLNEAVMHFGESIKEIINEEFGDGIMSAIDFYCSVDKVKGVDGKDRVVLTFDGKYLPHTEQKSEHMVSRLRLQGD.

Residues arginine 90, glutamate 93, and serine 116 contribute to the active site.

The protein belongs to the cyanase family.

It catalyses the reaction cyanate + hydrogencarbonate + 3 H(+) = NH4(+) + 2 CO2. In terms of biological role, catalyzes the reaction of cyanate with bicarbonate to produce ammonia and carbon dioxide. In Vitis vinifera (Grape), this protein is Cyanate hydratase.